The primary structure comprises 75 residues: Cytochrome c oxidase assembly factor 5 (75 aa).

Positions glutamine 28–arginine 66 constitute a CHCH domain. The Cx10C motif signature appears at cysteine 31–cysteine 42. 2 disulfides stabilise this stretch: cysteine 31/cysteine 58 and cysteine 42/cysteine 48. Positions cysteine 48–cysteine 58 match the Cx9C motif motif.

This sequence belongs to the PET191 family.

In terms of biological role, involved in an early step of the mitochondrial complex IV assembly process. The protein is Cytochrome c oxidase assembly factor 5 (coa5) of Danio rerio (Zebrafish).